A 484-amino-acid chain; its full sequence is Hemogen (484 aa).

Residues 1 to 25 show a composition bias toward basic and acidic residues; sequence MDLGKDQSHLKHHQTPDPHQEENHS. 2 disordered regions span residues 1–32 and 44–91; these read MDLG…IGTW and KAEV…PQPQ. The segment at 7–87 is necessary for nuclear localization; sequence QSHLKHHQTP…RQQNTELKVE (81 aa). Positions 61-79 are enriched in basic residues; the sequence is KKRKQQRTGKGNRRGRKRQ. 5 positions are modified to phosphoserine: serine 123, serine 159, serine 181, serine 188, and serine 201. Threonine 246 is subject to Phosphothreonine. Disordered stretches follow at residues 265-290, 306-369, and 386-471; these read DVPK…TDQG, EPKD…YSPE, and QETS…ILNE. Over residues 306–320 the composition is skewed to basic and acidic residues; the sequence is EPKDLSTKTHQESAE. A phosphoserine mark is found at serine 349 and serine 353. Position 360 is a phosphothreonine (threonine 360). Residues serine 363 and serine 367 each carry the phosphoserine modification. 3 stretches are compositionally biased toward basic and acidic residues: residues 413-428, 438-447, and 454-463; these read YKNK…EPHQ, PKAHQEDAKD, and EMKEKPKEEP.

Expressed in hematopoietic precursor cells, thyroid and spermatids (at protein level). Expressed in bone marrow, testis, thymus. Expressed in prostate cancer and ovarian cancer. Also expressed in thymus and thyroid tumors, non-Hodgkin lymphoma, various leukemia cell lines, peripheral blood mononuclear cells (PBMCs) and bone marrow mononuclear cells (BMMCs) of patients with leukemia.

It localises to the nucleus. Regulates the proliferation and differentiation of hematopoietic cells. Overexpression block the TPA-induced megakaryocytic differentiation in the K562 cell model. May also prevent cell apoptosis through the activation of the nuclear factor-kappa B (NF-kB). The sequence is that of Hemogen (HEMGN) from Homo sapiens (Human).